Here is a 617-residue protein sequence, read N- to C-terminus: Regulatory solute carrier protein family 1 member 1 (617 aa).

Over residues 1 to 22 the composition is skewed to polar residues; sequence MSSLPTSDGFNHPARSSGQSPD. 3 disordered regions span residues 1 to 106, 155 to 181, and 217 to 237; these read MSSL…EITV, ENQN…VAQQ, and KGNG…IPSS. Composition is skewed to basic and acidic residues over residues 43 to 52 and 66 to 83; these read SDSDRIEPKA and SEKK…HASS. Composition is skewed to polar residues over residues 89-103 and 155-165; these read TDQS…SSEE and ENQNLSQVSDP. The segment at 410 to 412 is involved in post-transcriptional down-regulation of SLC5A1; it reads QCP. In terms of domain architecture, UBA spans 571–611; the sequence is IFPATDIDRILRAGFTLQEALGALHRVGGNADLALLVLLAK.

Interacts with YRDC. Expressed in small intestine, kidney and brain.

Its subcellular location is the cell membrane. The protein resides in the nucleus. The protein localises to the golgi apparatus. It localises to the trans-Golgi network. In terms of biological role, mediates transcriptional and post-transcriptional regulation of SLC5A1. Inhibits a dynamin and PKC-dependent exocytotic pathway of SLC5A1. Also involved in transcriptional regulation of SLC22A2. Exhibits glucose-dependent, short-term inhibition of SLC5A1 and SLC22A2 by inhibiting the release of vesicles from the trans-Golgi network. The sequence is that of Regulatory solute carrier protein family 1 member 1 (RSC1A1) from Homo sapiens (Human).